A 199-amino-acid chain; its full sequence is Molybdenum cofactor guanylyltransferase (199 aa).

Residues 12 to 14, Lys-25, Asn-53, Asp-71, and Asp-101 each bind GTP; that span reads LAG. Mg(2+) is bound at residue Asp-101.

Belongs to the MobA family. Monomer. Mg(2+) serves as cofactor.

The protein localises to the cytoplasm. The catalysed reaction is Mo-molybdopterin + GTP + H(+) = Mo-molybdopterin guanine dinucleotide + diphosphate. In terms of biological role, transfers a GMP moiety from GTP to Mo-molybdopterin (Mo-MPT) cofactor (Moco or molybdenum cofactor) to form Mo-molybdopterin guanine dinucleotide (Mo-MGD) cofactor. The sequence is that of Molybdenum cofactor guanylyltransferase from Cupriavidus taiwanensis (strain DSM 17343 / BCRC 17206 / CCUG 44338 / CIP 107171 / LMG 19424 / R1) (Ralstonia taiwanensis (strain LMG 19424)).